A 1145-amino-acid polypeptide reads, in one-letter code: Probable ATP-dependent RNA helicase DHX34 (1145 aa).

A compositionally biased stretch (basic and acidic residues) spans 1-14 (MPPPRTREGRGHRD). Residues 1–27 (MPPPRTREGRGHRDRDHHRAPREEEAP) form a disordered region. One can recognise a Helicase ATP-binding domain in the interval 174 to 334 (LQTLKEHQVV…FSHAPVVQVP (161 aa)). 187–194 (GDTGCGKS) provides a ligand contact to ATP. The DEAH box signature appears at 281-284 (DEVH). Positions 370–538 (AIDNKYPPEE…ALVLQMKSMS (169 aa)) constitute a Helicase C-terminal domain. 2 disordered regions span residues 726–764 (LKRQ…QRAD) and 1091–1114 (NTCP…PQKT). Phosphoserine is present on residues S749 and S750.

The protein belongs to the DEAD box helicase family. DEAH subfamily. In terms of assembly, forms a complex with RUVBL1 and RUVBL2. Part of a complex composed of SMG1, DHX34 and UPF1; within the complex DHX34 acts as a scaffolding protein to facilitate SMG1 phosphorylation of UPF1. Interacts with UPF1, MOV10, EIF4A3, XRN2, SMG6, SMG7, SMG9, UPF3A, UPF3B, CASC3/MLN51, XRN1, DIS3 and DCP1A; the interactions are RNA-independent. Interacts with NCBP1/CPB80; the interaction is RNA-dependent. Interacts (via C-terminus) with SMG1; the interaction is RNA-independent.

It carries out the reaction ATP + H2O = ADP + phosphate + H(+). Its function is as follows. Probable ATP-binding RNA helicase. Required for nonsense-mediated decay (NMD) degradation of mRNA transcripts containing premature stop codons. Promotes the phosphorylation of UPF1 along with its interaction with key NMD pathway proteins UPF2 and EIF4A3. Negatively regulates the nucleotide binding ability and ATP hydrolysis of the RUVBL1-RUVBL2 complex via induction of N-terminus conformation changes of the RUVBL2 subunits. The sequence is that of Probable ATP-dependent RNA helicase DHX34 from Mus musculus (Mouse).